The primary structure comprises 357 residues: Putative DENN domain-containing protein 10 B (357 aa).

In terms of domain architecture, uDENN spans 1–140; it reads MAAAELADTQ…TKGICQSEEN (140 aa). The cDENN domain occupies 159–299; the sequence is IKDIVSQFGM…PEKSESQVIQ (141 aa). One can recognise a dDENN domain in the interval 301–357; sequence IALKTREIFTNLAPFSEVSADGEKRVLNLEALKQKRFPPATENFLYHLAAAEQMLKI.

Belongs to the DENND10 family.

It localises to the late endosome. In terms of biological role, may be a guanine nucleotide exchange factor (GEF). This Homo sapiens (Human) protein is Putative DENN domain-containing protein 10 B.